Here is a 259-residue protein sequence, read N- to C-terminus: Light-harvesting complex stress-related protein 3.1, chloroplastic (259 aa).

Residues M1–A45 constitute a chloroplast transit peptide. Y51 lines the chlorophyll b pocket. Chlorophyll a contacts are provided by F66, E87, and H90. R92 is a binding site for chlorophyll b. A helical transmembrane segment spans residues V93 to F113. Q130 serves as a coordination point for chlorophyll a. Residues E137–T157 traverse the membrane as a helical segment. Residues E147 and R150 each coordinate chlorophyll b. The chlorophyll a site is built by K196, E197, N200, R202, and Q214. The chain crosses the membrane as a helical span at residues L203–F223.

This sequence belongs to the light-harvesting chlorophyll a/b-binding (LHC) protein family. As to quaternary structure, interacts with the photosystem II-light-harvesting complex II (PSII-LHCII) supercomplex to form PSII-LHCII-LHCSR3 supercomplex.

The protein localises to the plastid. Its subcellular location is the chloroplast thylakoid membrane. In terms of biological role, required for non-photochemical quenching (NPQ), a mechanism that converts and dissipates the harmful excess absorbed light energy into heat and protect the photosynthetic apparatus from photo-oxidative damage. NPQ includes dissipating excess light energy to heat (qE) and the reversible coupling of LHCII to photosystems (state transitions or qT), which are considered separate NPQ mechanisms. Is responsible for most of the excess light energy to heat dissipation (qE), also known as energy-dependent chlorophyll fluorescence quenching activity of chlorophyll excited states. Involved in a de-coupling and re-coupling of energy transfer to photosystem II (PSII) during qT. Binds chlorophyll a and b. Is able to sense luminal acidification of the thylakoid membranes, which occurs along with elevated electron flow caused by excess light. Establishes interactions with photosystem II (PSII) antenna components upon lumen acidification, and protonation of lumen-exposed, negatively charged residues both in LHCSR3 and in PSII antenna components. Mediates excitation energy transfer from light-harvesting complex II (LHCII) to photosystem I (PSI), rather than photosystem II (PSII), at low pH, which mimics the acidified lumen of the thylakoid membranes in high light-exposed chloroplasts. Activates PSI-dependent fluorescence quenching in addition to dissipating excitation energy in LHCII to avoid photooxidative stress under excess light. Contributes with PGRL1 to the regulation of electron flow upstream of photosystem I (PSI), and limits the accumulation of electrons on the PSI acceptor side, thus avoiding PSI photoinhibition. The chain is Light-harvesting complex stress-related protein 3.1, chloroplastic from Chlamydomonas reinhardtii (Chlamydomonas smithii).